The chain runs to 101 residues: Small ribosomal subunit protein uS14 (101 aa).

It belongs to the universal ribosomal protein uS14 family. As to quaternary structure, part of the 30S ribosomal subunit. Contacts proteins S3 and S10.

In terms of biological role, binds 16S rRNA, required for the assembly of 30S particles and may also be responsible for determining the conformation of the 16S rRNA at the A site. This Stutzerimonas stutzeri (strain A1501) (Pseudomonas stutzeri) protein is Small ribosomal subunit protein uS14.